Consider the following 145-residue polypeptide: LIM domain only protein 3 (145 aa).

2 LIM zinc-binding domains span residues 11–73 (KGCA…LFGV) and 75–137 (GNCA…GLMK).

This Bos taurus (Bovine) protein is LIM domain only protein 3 (LMO3).